A 124-amino-acid chain; its full sequence is Fluoride-specific ion channel FluC (124 aa).

Helical transmembrane passes span 4-24 (LLLV…ISIF), 35-55 (FGTL…YALG), 60-80 (ISPE…TTFS), and 102-122 (VVLN…LVFS). Na(+) contacts are provided by Gly74 and Thr77.

It belongs to the fluoride channel Fluc/FEX (TC 1.A.43) family.

Its subcellular location is the cell inner membrane. It carries out the reaction fluoride(in) = fluoride(out). Na(+) is not transported, but it plays an essential structural role and its presence is essential for fluoride channel function. Its function is as follows. Fluoride-specific ion channel. Important for reducing fluoride concentration in the cell, thus reducing its toxicity. This Shewanella oneidensis (strain ATCC 700550 / JCM 31522 / CIP 106686 / LMG 19005 / NCIMB 14063 / MR-1) protein is Fluoride-specific ion channel FluC.